The chain runs to 669 residues: MSKEIAKKRIEELRDLLNTFNYQYHVLDNPSVSDAEYDRNMQELIKLEAENPEFMSEDSPSIRVGGTVLDIFEKVTHKSPMLSLGNAFNEGDLRDFDRRVRQGIDDANVRYICELKIDGLAVSLHYEKGRFIQGATRGDGVTGEDITQNLKTIKAIPLRLNEEVTLEARGEAYMPKRSFVKLNEEKEQNGEDVFANPRNAAAGSIRQLDPKIAAKRNLSMFVYGLANVEEKTIPSHSESLDYLGELGFKTNPNRRTCETIEEVIAYVEEWQEKRPHLDYEIDGIVIKVDDVALQESLGTTAKSPRWAIAYKFPAEEVVTRLTGIELSVGRTGVVTPTAELEPVRVAGTIVRRASLHNEDLIREKDIRIGDYVVVKKAGDIIPEVINVIFDKRTGGEEEYHMPTHCPACESELVRLEEEVALRCINPTCPAQIREGLIHFVSRNAMNIDGLGERVITQLFDADYIRTFADLYSLTKEQLLQLERFGEKSATNLVQAIENSKENSLERLLFGLGIRHVGAKAARTFAEHFETMDALVKATEEELKAINEIGEKMAQSVVAYFDNEDVLELLQQFKEYGVNMTYKGIKIADLQNVESYFAGKTVVLTGKLEVMGRSEAKKKIEALGGKVTGSVSKSTDLVVAGEAAGSKLAQAEKHNVEVWNEERFLQELNK.

NAD(+)-binding positions include 34 to 38, 83 to 84, and Glu-114; these read DAEYD and SL. Lys-116 (N6-AMP-lysine intermediate) is an active-site residue. The NAD(+) site is built by Arg-137, Glu-171, Lys-287, and Lys-311. Zn(2+)-binding residues include Cys-405, Cys-408, Cys-423, and Cys-428. The BRCT domain occupies 591–669; sequence NVESYFAGKT…EERFLQELNK (79 aa).

This sequence belongs to the NAD-dependent DNA ligase family. LigA subfamily. The cofactor is Mg(2+). It depends on Mn(2+) as a cofactor.

It catalyses the reaction NAD(+) + (deoxyribonucleotide)n-3'-hydroxyl + 5'-phospho-(deoxyribonucleotide)m = (deoxyribonucleotide)n+m + AMP + beta-nicotinamide D-nucleotide.. Functionally, DNA ligase that catalyzes the formation of phosphodiester linkages between 5'-phosphoryl and 3'-hydroxyl groups in double-stranded DNA using NAD as a coenzyme and as the energy source for the reaction. It is essential for DNA replication and repair of damaged DNA. This is DNA ligase from Bacillus cereus (strain AH820).